Reading from the N-terminus, the 176-residue chain is Ribosome rescue factor SmrB (176 aa).

Residues 29–51 (TIIQQPKKNTKQKEIKRSNREAS) are disordered. A compositionally biased stretch (basic and acidic residues) spans 39–51 (KQKEIKRSNREAS). The region spanning 97–172 (LDMHGMTQQE…GDGALLVLLS (76 aa)) is the Smr domain.

Belongs to the SmrB family. As to quaternary structure, associates with collided ribosomes, but not with correctly translating polysomes.

Its function is as follows. Acts as a ribosome collision sensor. Detects stalled/collided disomes (pairs of ribosomes where the leading ribosome is stalled and a second ribosome has collided with it) and endonucleolytically cleaves mRNA at the 5' boundary of the stalled ribosome. Stalled/collided disomes form a new interface (primarily via the 30S subunits) that binds SmrB. Cleaved mRNA becomes available for tmRNA ligation, leading to ribosomal subunit dissociation and rescue of stalled ribosomes. This Vibrio parahaemolyticus serotype O3:K6 (strain RIMD 2210633) protein is Ribosome rescue factor SmrB.